A 68-amino-acid polypeptide reads, in one-letter code: Large ribosomal subunit protein uL29 (68 aa).

The protein belongs to the universal ribosomal protein uL29 family.

This chain is Large ribosomal subunit protein uL29, found in Limosilactobacillus reuteri (strain DSM 20016) (Lactobacillus reuteri).